A 110-amino-acid polypeptide reads, in one-letter code: Protein OPG154 (110 aa).

It belongs to the orthopoxvirus OPG154 protein family. In terms of assembly, homohexamers, covalently linked. Interacts with OPG144 and OPG153.

The protein localises to the virion. In terms of biological role, structural protein involved in the envelopment of mature virion (MV) to form the wrapped virion (WV). The wrapping consists of the addition of Golgi membranes to the mature virion. Participates in mature virion (MV) movement within the infected cell. May play an indirect role in MV-cell fusion. This chain is Protein OPG154 (OPG154), found in Homo sapiens (Human).